The sequence spans 193 residues: Leucyl/phenylalanyl-tRNA--protein transferase (193 aa).

Belongs to the L/F-transferase family.

The protein resides in the cytoplasm. The catalysed reaction is N-terminal L-lysyl-[protein] + L-leucyl-tRNA(Leu) = N-terminal L-leucyl-L-lysyl-[protein] + tRNA(Leu) + H(+). It carries out the reaction N-terminal L-arginyl-[protein] + L-leucyl-tRNA(Leu) = N-terminal L-leucyl-L-arginyl-[protein] + tRNA(Leu) + H(+). It catalyses the reaction L-phenylalanyl-tRNA(Phe) + an N-terminal L-alpha-aminoacyl-[protein] = an N-terminal L-phenylalanyl-L-alpha-aminoacyl-[protein] + tRNA(Phe). Functions in the N-end rule pathway of protein degradation where it conjugates Leu, Phe and, less efficiently, Met from aminoacyl-tRNAs to the N-termini of proteins containing an N-terminal arginine or lysine. This is Leucyl/phenylalanyl-tRNA--protein transferase from Gloeobacter violaceus (strain ATCC 29082 / PCC 7421).